The chain runs to 546 residues: Peroxisomal OPC-8:0-CoA ligase 1 (546 aa).

Residues S197, S198, G199, T200, T201, and K205 each contribute to the ATP site. Residue K265 participates in CoA binding. An SBD1 region spans residues 267-338; the sequence is EMHEMMSAIG…EKYPTVKILQ (72 aa). 5 residues coordinate ATP: Q338, G339, T343, D424, and R439. Positions 339–403 are SBD2; it reads GYGLTESTGI…LKGPSIMKGY (65 aa). Residues K447 and G448 each coordinate CoA. K530 provides a ligand contact to ATP. Residues 544-546 carry the Microbody targeting signal motif; sequence SKL.

The protein belongs to the ATP-dependent AMP-binding enzyme family. Mg(2+) is required as a cofactor. Expressed at low levels in seedlings, cotyledons, leaves, hypocotyls and roots.

It localises to the peroxisome. It catalyses the reaction (9S,13S,15Z)-12-oxophyto-10,15-dienoate + ATP + CoA = (10Z,15Z)-12-oxophytodienoyl-CoA + AMP + diphosphate. It carries out the reaction (1S,2S)-OPC-8 + ATP + CoA = OPC8-CoA + AMP + diphosphate. The catalysed reaction is hexadecanoate + ATP + CoA = hexadecanoyl-CoA + AMP + diphosphate. The enzyme catalyses (9Z)-octadecenoate + ATP + CoA = (9Z)-octadecenoyl-CoA + AMP + diphosphate. It catalyses the reaction tetradecanoate + ATP + CoA = tetradecanoyl-CoA + AMP + diphosphate. It carries out the reaction decanoate + ATP + CoA = decanoyl-CoA + AMP + diphosphate. The catalysed reaction is dodecanoate + ATP + CoA = dodecanoyl-CoA + AMP + diphosphate. The enzyme catalyses octadecanoate + ATP + CoA = octadecanoyl-CoA + AMP + diphosphate. It catalyses the reaction OPC-6 + ATP + CoA = OPC-6-CoA + AMP + diphosphate. It carries out the reaction dinor-OPDA + ATP + CoA = dinor-OPDA-CoA + AMP + diphosphate. Its function is as follows. Contributes to jasmonic acid biosynthesis by initiating the beta-oxidative chain shortening of its precursors. Converts 12-oxo-phytodienoic acid (OPDA) and 3-oxo-2-(2'-pentenyl)-cyclopentane-1-octanoic acid (OPC-8:0) into OPDA-CoA and OPC-8:0-CoA, respectively. Follows a two-step reaction mechanism, wherein the carboxylate substrate first undergoes adenylation by ATP, followed by a thioesterification in the presence of CoA to yield the final CoA thioester. In Arabidopsis thaliana (Mouse-ear cress), this protein is Peroxisomal OPC-8:0-CoA ligase 1.